The following is a 330-amino-acid chain: MMTNAAQITKQRNSGKRHRACERCREQFELNEPYFLLGASSWHMRCFLCAQCMDPLVGTTYFQFENRIYCEHDFKTLYAPVCAKCNEFVIGQVVHSSNNSYHLACFTCDECNVHLNSQIAYRYQGTILCFLCNQKKPKMRIYNCNKCKQHVDNSDLLTYQENPYHAYHFKCTTCKKVLESDARTIKDDLFCPRCFDFKCEVCFDCKKVIDPQVEQSIFTMNKHWHTDHFRCATCARPFFGHEHYEKNGKAYCRDDFLELIGHHCFICDRNVGGGMVHVFGKAFCPECYRCRGCDKVLHYKDKVMELDLMPLCKKCLGNKTFQKALKYKSL.

5 consecutive LIM zinc-binding domains span residues 21–73, 82–132, 144–194, 202–255, and 264–315; these read CERC…CEHD, CAKC…CFLC, CNKC…CPRC, CFDC…CRDD, and CFIC…CKKC.

In terms of tissue distribution, expressed in neurons and intestine.

The protein resides in the cytoplasm. It localises to the nucleus. This chain is LIM domain-containing protein pin-2 (pin-2), found in Caenorhabditis elegans.